A 642-amino-acid chain; its full sequence is Chaperone protein DnaK (642 aa).

At threonine 196 the chain carries Phosphothreonine; by autocatalysis. The span at 593 to 603 (STMYQTPSGDT) shows a compositional bias: polar residues. Residues 593 to 642 (STMYQTPSGDTPPSEPETGASEESKGGDKTQGDGEVDAEYEVIDGNDKDK) are disordered. The segment covering 614–624 (EESKGGDKTQG) has biased composition (basic and acidic residues). Positions 626–636 (GEVDAEYEVID) are enriched in acidic residues.

It belongs to the heat shock protein 70 family.

In terms of biological role, acts as a chaperone. The protein is Chaperone protein DnaK of Chlorobium phaeobacteroides (strain BS1).